We begin with the raw amino-acid sequence, 355 residues long: D-alanine--D-alanine ligase (355 aa).

The 208-residue stretch at 143–350 (KIIFSNLKIP…IEQLVAKLVD (208 aa)) folds into the ATP-grasp domain. ATP is bound at residue 178–233 (LKKLNFPVFVKPSNSGSSLGISKVINKSEIIPALEKARGIDPSILIEEGLEVREIE). Asp-303, Glu-317, and Asn-319 together coordinate Mg(2+).

Belongs to the D-alanine--D-alanine ligase family. The cofactor is Mg(2+). Mn(2+) is required as a cofactor.

Its subcellular location is the cytoplasm. The catalysed reaction is 2 D-alanine + ATP = D-alanyl-D-alanine + ADP + phosphate + H(+). The protein operates within cell wall biogenesis; peptidoglycan biosynthesis. Cell wall formation. This chain is D-alanine--D-alanine ligase, found in Prochlorococcus marinus (strain AS9601).